A 1194-amino-acid chain; its full sequence is F-box only protein 38 (1194 aa).

The F-box domain maps to 30-75 (MNQLSHEVLCHIFRYLPLQDIMCMECLSRKLKEAVTLYLRVVRVVD). Residues 59 to 119 (KLKEAVTLYL…LHPRYLERRR (61 aa)) are interaction with KLF7. 3 short sequence motifs (nuclear export signal) span residues 194-201 (LHLVGVNV), 307-316 (LEVDLGYLII), and 451-460 (LLPSLEFISL). 4 disordered regions span residues 487 to 529 (ALVS…FRPD), 577 to 776 (EEQA…DAES), 793 to 879 (RTGR…RARS), and 896 to 915 (KPCH…STSD). The span at 493 to 510 (NSNNDNDNNAPNNNANLH) shows a compositional bias: low complexity. A Phosphothreonine modification is found at T592. 3 positions are modified to phosphoserine: S599, S601, and S607. The segment covering 599 to 609 (SESDDEEDSLE) has biased composition (acidic residues). Basic and acidic residues-rich tracts occupy residues 622 to 631 (RYSEREEKTG) and 683 to 701 (IKAD…KSKD). Low complexity predominate over residues 705–728 (SCSSSSSSTAASTAGNASSPSTAS). S742 and S746 each carry phosphoserine. Over residues 764–774 (EDSEAMEEGDA) the composition is skewed to acidic residues. Residues 793 to 804 (RTGRCSDEERPS) are compositionally biased toward basic and acidic residues. Residues 855–867 (SSQPESCDVQSNE) show a composition bias toward polar residues. The segment covering 896-906 (KPCHAMKRKRT) has biased composition (basic residues). A Nuclear localization signal motif is present at residues 902–905 (KRKR).

In terms of assembly, part of the SCF (SKP1-CUL1-F-box) E3 ubiquitin-protein ligase complex SCF(FBXO38) composed of CUL1, SKP1, RBX1 and FBXO38. Interacts with KLF7. Interacts with PDCD1/PD-1. In terms of tissue distribution, expressed at high levels in embryo (developing brain, spinal cord, branchial arms and limbs). Widely expressed at low levels in adult tissues, with highest expression in testis. Expressed in postmeiotic spermatids.

It localises to the cytoplasm. Its subcellular location is the cytosol. It is found in the nucleus. It participates in protein modification; protein ubiquitination. Its function is as follows. Substrate recognition component of a SCF (SKP1-CUL1-F-box protein) E3 ubiquitin-protein ligase complex which mediates the ubiquitination and subsequent proteasomal degradation of PDCD1/PD-1, thereby regulating T-cells-mediated immunity. Required for anti-tumor activity of T-cells by promoting the degradation of PDCD1/PD-1; the PDCD1-mediated inhibitory pathway being exploited by tumors to attenuate anti-tumor immunity and facilitate tumor survival. May indirectly stimulate the activity of transcription factor KLF7, a regulator of neuronal differentiation, without promoting KLF7 ubiquitination. The polypeptide is F-box only protein 38 (Mus musculus (Mouse)).